The sequence spans 362 residues: S-adenosylmethionine:tRNA ribosyltransferase-isomerase (362 aa).

It belongs to the QueA family. As to quaternary structure, monomer.

It localises to the cytoplasm. It catalyses the reaction 7-aminomethyl-7-carbaguanosine(34) in tRNA + S-adenosyl-L-methionine = epoxyqueuosine(34) in tRNA + adenine + L-methionine + 2 H(+). It functions in the pathway tRNA modification; tRNA-queuosine biosynthesis. Functionally, transfers and isomerizes the ribose moiety from AdoMet to the 7-aminomethyl group of 7-deazaguanine (preQ1-tRNA) to give epoxyqueuosine (oQ-tRNA). The polypeptide is S-adenosylmethionine:tRNA ribosyltransferase-isomerase (Methylobacterium sp. (strain 4-46)).